The sequence spans 414 residues: Serine/threonine transporter SstT (414 aa).

A run of 9 helical transmembrane segments spans residues 19–39, 55–75, 89–109, 148–168, 189–209, 223–243, 297–317, 323–343, and 363–383; these read IIVG…LEPV, FVKG…IAAI, IVML…LASF, ALAT…GIAL, IVHL…AATL, LLLV…PFIV, IPLG…VLTL, LGIP…AVCA, and LFGI…VIGV.

It belongs to the dicarboxylate/amino acid:cation symporter (DAACS) (TC 2.A.23) family.

The protein resides in the cell inner membrane. The enzyme catalyses L-serine(in) + Na(+)(in) = L-serine(out) + Na(+)(out). The catalysed reaction is L-threonine(in) + Na(+)(in) = L-threonine(out) + Na(+)(out). Its function is as follows. Involved in the import of serine and threonine into the cell, with the concomitant import of sodium (symport system). This Actinobacillus succinogenes (strain ATCC 55618 / DSM 22257 / CCUG 43843 / 130Z) protein is Serine/threonine transporter SstT.